A 445-amino-acid chain; its full sequence is Chromosome partition protein MukF (445 aa).

Positions 213–241 are leucine-zipper; the sequence is LSETSNTLKELQDTLQAAGDELQTQILDI.

Belongs to the MukF family. In terms of assembly, interacts, and probably forms a ternary complex, with MukE and MukB via its C-terminal region. The complex formation is stimulated by calcium or magnesium. It is required for an interaction between MukE and MukB.

The protein resides in the cytoplasm. It is found in the nucleoid. Its function is as follows. Involved in chromosome condensation, segregation and cell cycle progression. May participate in facilitating chromosome segregation by condensation DNA from both sides of a centrally located replisome during cell division. Not required for mini-F plasmid partitioning. Probably acts via its interaction with MukB and MukE. Overexpression results in anucleate cells. It has a calcium binding activity. The polypeptide is Chromosome partition protein MukF (Vibrio vulnificus (strain YJ016)).